The primary structure comprises 371 residues: Neuropeptide Y receptor type 6 (371 aa).

The Extracellular segment spans residues 1–31 (MEVLTNQPTPNKTSGKSNNSAFFYFESCQPP). Residues Asn-11 and Asn-18 are each glycosylated (N-linked (GlcNAc...) asparagine). Residues 32-52 (FLAILLLLIAYTVILIMGIFG) traverse the membrane as a helical segment. Over 53 to 82 (NLSLIIIIFKKQREAQNVTNILIANLSLSD) the chain is Cytoplasmic. The helical transmembrane segment at 83–103 (ILVCVMCIPFTVIYTLMDHWV) threads the bilayer. The Extracellular segment spans residues 104–111 (FGNTMCKL). Cys-109 and Cys-196 are oxidised to a cystine. A helical membrane pass occupies residues 112-132 (TSYVQSVSVSVSIFSLVLIAI). The Cytoplasmic portion of the chain corresponds to 133–150 (ERYQLIVNPRGWKPRVAH). A helical membrane pass occupies residues 151–171 (AYWGIILIWLISLTLSIPLFL). The Extracellular segment spans residues 172 to 206 (SYHLTNEPFHNLSLPTDIYTHQVACVEIWPSKLNQ). Asn-182 carries an N-linked (GlcNAc...) asparagine glycan. Residues 207 to 227 (LLFSTSLFMLQYFVPLGFILI) traverse the membrane as a helical segment. Residues 228-263 (CYLKIVLCLRKRTRQVDRRKENKSRLNENKRVNVML) lie on the Cytoplasmic side of the membrane. Residues 264–284 (ISIVVTFGACWLPLNIFNVIF) traverse the membrane as a helical segment. The Extracellular portion of the chain corresponds to 285-297 (DWYHEMLMSCHHD). A helical membrane pass occupies residues 298–318 (LVFVVCHLIAMVSTCINPLFY). The Cytoplasmic segment spans residues 319–371 (GFLNKNFQKDLMMLIHHCWCGEPQESYENIAMSTMHTDESKGSLKLAHIPTGI). The S-palmitoyl cysteine moiety is linked to residue Cys-336.

This sequence belongs to the G-protein coupled receptor 1 family. Kidney and discrete regions of the hypothalamus including the suprachiasmatic nucleus, anterior hypothalamus, bed nucleus stria terminalis, and the ventromedial nucleus.

The protein localises to the cell membrane. In terms of biological role, receptor for neuropeptide Y and peptide YY. The rank order of affinity of this receptor for pancreatic polypeptides is NPY = PYY &gt;= NPY (2-36) = [Leu-31, Pro-34] NPY &gt; NPY (13-36) &gt; PP. The activity of this receptor is mediated by G proteins that inhibits adenylate cyclase activity. This Mus musculus (Mouse) protein is Neuropeptide Y receptor type 6 (Npy6r).